The chain runs to 139 residues: GSK3-beta interaction protein (139 aa).

The disordered stretch occupies residues 1–22; the sequence is METDCNPMELSSMSGFEEGSEL. The interval 41–45 is required for PRKAR2A interaction; contributes to a protective effect against H(2)O(2)-induced apoptosis; that stretch reads VNDVL. The interaction with GSK3B and acts as a GSK3B inhibitor stretch occupies residues 115 to 139; that stretch reads SPAYREAFGNALLQRLEALKRDGQS.

It belongs to the GSKIP family. In terms of assembly, forms a complex composed of PRKAR2A or PRKAR2B, GSK3B and GSKIP through GSKIP interaction; facilitates PKA-induced phosphorylation of GSK3B leading to GSK3B inactivation; recruits DNM1L through GSK3B for PKA-mediated phosphorylation of DNM1L; promotes beta-catenin degradation through GSK3B-induced phosphorylation of beta-catenin; stabilizes beta-catenin and enhances Wnt-induced signaling through PKA-induced phosphorylation of beta-catenin. Interacts with GSK3B; induces GSK3B-mediated phosphorylation of GSKIP and inhibits GSK3B kinase activity. Phosphorylated by GSK3B.

The protein resides in the cytoplasm. Its subcellular location is the nucleus. Functionally, A-kinase anchoring protein for GSK3B and PKA that regulates or facilitates their kinase activity towards their targets. The ternary complex enhances Wnt-induced signaling by facilitating the GSK3B- and PKA-induced phosphorylation of beta-catenin leading to beta-catenin degradation and stabilization respectively. Upon cAMP activation, the ternary complex contributes to neuroprotection against oxidative stress-induced apoptosis by facilitating the PKA-induced phosphorylation of DML1 and PKA-induced inactivation of GSK3B. During neurite outgrowth promotes neuron proliferation; while increases beta-catenin-induced transcriptional activity through GSK3B kinase activity inhibition, reduces N-cadherin level to promote cell cycle progression. May play a role in cleft palate formation and is required for postnatal life through modulation of the activity of GSK3B during development. The sequence is that of GSK3-beta interaction protein from Macaca fascicularis (Crab-eating macaque).